The chain runs to 431 residues: MFVDQVKINVKAGNGGNGMVAFRREKFVPNGGPAGGDGGRGGNVVFVVDEGLRTLMDFRYQRKFKAKSGGNGAIKSMTGRGAEDTIIKVPQGTTIMDAETDQVIGDLVAPDDSVIVAHGGRGGRGNIHFASPKNPAPEIAENGEPGEEREIRLELKVLADVGLVGFPSVGKSTLLSTVTSAKPKIAEYHFTTLVPNLGMVRLPDGRDFVMADLPGLIEGAANGVGLGFQFLRHVERTRVILHLIDMSGLEGRTPYDDFEKINQELQTYDPDILKRPQIVVANKMDMPDSAENLAQFKEDLKQDTLLAQTPEIFAVSALTHDGLTPLLQRTADMLAETPQFPVKQPEVATTAEYNFQPEAEFTLNQDADGTWILGGDKLVKLFKMTDVNHEESLLRFARQMRGMGVDDSLREHGAKNGDLVKIDDFTFEYMA.

Residues M1–L158 form the Obg domain. The interval G125–P145 is disordered. An OBG-type G domain is found at A159–A335. GTP is bound by residues G165–S172, F190–V194, D212–G215, N282–D285, and S316–L318. Residues S172 and T192 each coordinate Mg(2+). Positions Y353–A431 constitute an OCT domain.

The protein belongs to the TRAFAC class OBG-HflX-like GTPase superfamily. OBG GTPase family. Monomer. Mg(2+) is required as a cofactor.

The protein resides in the cytoplasm. An essential GTPase which binds GTP, GDP and possibly (p)ppGpp with moderate affinity, with high nucleotide exchange rates and a fairly low GTP hydrolysis rate. Plays a role in control of the cell cycle, stress response, ribosome biogenesis and in those bacteria that undergo differentiation, in morphogenesis control. This is GTPase Obg from Levilactobacillus brevis (strain ATCC 367 / BCRC 12310 / CIP 105137 / JCM 1170 / LMG 11437 / NCIMB 947 / NCTC 947) (Lactobacillus brevis).